Reading from the N-terminus, the 37-residue chain is Delta/kappa-conotoxin Mo3964 (37 aa).

Cystine bridges form between Cys-4–Cys-12, Cys-11–Cys-27, and Cys-21–Cys-34.

Expressed by the venom duct.

The protein resides in the secreted. In terms of biological role, this toxin reduces the outward currents that are due to the opening of voltage-gated potassium channels in DRG neurons. In addition, leftward shift in the presence of this toxin is observed in averaged normalized conductance-voltage plot of outward sodium currents (Nav1.2/SCN2A). In Conus monile (Necklace cone), this protein is Delta/kappa-conotoxin Mo3964.